The following is a 396-amino-acid chain: Probable sugar efflux transporter (396 aa).

The next 12 membrane-spanning stretches (helical) occupy residues 15 to 35 (VLIM…PVAM), 51 to 71 (GLMM…AMLA), 84 to 104 (LFII…FWIL), 109 to 129 (MCIA…VMRI), 137 to 157 (QALG…LPIG), 168 to 188 (VTFG…IRLL), 209 to 229 (PLLL…FTAY), 245 to 265 (NFAT…SLLF), 273 to 293 (PTKF…LLLF), 297 to 317 (TIIA…CIGL), 333 to 353 (VATA…ALFG), and 365 to 385 (IGYT…TTHL).

This sequence belongs to the major facilitator superfamily. SotB (TC 2.A.1.2) family.

The protein resides in the cell inner membrane. In terms of biological role, involved in the efflux of sugars. The physiological role may be the reduction of the intracellular concentration of toxic sugars or sugar metabolites. The polypeptide is Probable sugar efflux transporter (Haemophilus influenzae (strain ATCC 51907 / DSM 11121 / KW20 / Rd)).